Here is a 400-residue protein sequence, read N- to C-terminus: S-adenosylmethionine sensor upstream of mTORC1 (400 aa).

Arg99, Gly168, Asp186, Asp198, Phe199, and Ser240 together coordinate S-adenosyl-L-methionine.

Belongs to the BMT2/SAMTOR family. In terms of assembly, interacts with the GATOR1 complex; interaction is disrupted when samtor binds S-adenosyl-L-methionine. Interacts with the KICSTOR complex; interaction is disrupted when samtor binds S-adenosyl-L-methionine.

Functionally, S-adenosyl-L-methionine-binding protein that acts as an inhibitor of mTORC1 signaling via interaction with the GATOR1 and KICSTOR complexes. Acts as a sensor of S-adenosyl-L-methionine to signal methionine sufficiency to mTORC1: in presence of methionine, binds S-adenosyl-L-methionine, leading to disrupt interaction with the GATOR1 and KICSTOR complexes and promote mTORC1 signaling. Upon methionine starvation, S-adenosyl-L-methionine levels are reduced, thereby promoting the association with GATOR1 and KICSTOR, leading to inhibit mTORC1 signaling. Probably also acts as a S-adenosyl-L-methionine-dependent methyltransferase. The polypeptide is S-adenosylmethionine sensor upstream of mTORC1 (Xenopus laevis (African clawed frog)).